The following is a 377-amino-acid chain: MEEFDYISEFPDCLLTQILLNLPTKDSVKTSVLSKRWRNLWLNVPGLRLRTFDFPVFPYPYEEGFVRFMDRFMEFKCRSRLQKFMITYFEHNGYRDRLMELIGTLVDRGIQHLYVYMHTCNRVDFIRQNIYKSKTLVSLKLYNVELKNPEFVVSLPCLKILKLENIFHGEDGPLVVEKLISGCPVLEDLELIRPFDDNVGYGSLTAPKYSRNRDIIGDFLTVISSVRHTIICYSTSKMLYSYSKQLGPIPQFHNLYHLQARFSSSSLQLLPTFLESCPACPNLKNLIMEFPFEPKNIDFHKVPQCLISTLEYVQIEELILKEKSGIKLVDYFLENSAVLKKLTLSFTYHSKKKQDPESYKKLLTSTKLSPTCQIIID.

The F-box domain occupies 4–50; it reads FDYISEFPDCLLTQILLNLPTKDSVKTSVLSKRWRNLWLNVPGLRLR. Positions 297–346 constitute an FBD domain; it reads IDFHKVPQCLISTLEYVQIEELILKEKSGIKLVDYFLENSAVLKKLTLSF.

This is Putative FBD-associated F-box protein At5g44940 from Arabidopsis thaliana (Mouse-ear cress).